The sequence spans 270 residues: NAD kinase (270 aa).

The active-site Proton acceptor is the Asp-61. Residues 61 to 62 (DG), 133 to 134 (NE), Arg-144, Arg-163, Asp-165, and 176 to 181 (TAYNLS) each bind NAD(+).

It belongs to the NAD kinase family. The cofactor is a divalent metal cation.

It is found in the cytoplasm. It carries out the reaction NAD(+) + ATP = ADP + NADP(+) + H(+). Its function is as follows. Involved in the regulation of the intracellular balance of NAD and NADP, and is a key enzyme in the biosynthesis of NADP. Catalyzes specifically the phosphorylation on 2'-hydroxyl of the adenosine moiety of NAD to yield NADP. The protein is NAD kinase of Natronomonas pharaonis (strain ATCC 35678 / DSM 2160 / CIP 103997 / JCM 8858 / NBRC 14720 / NCIMB 2260 / Gabara) (Halobacterium pharaonis).